The following is a 770-amino-acid chain: NAD-dependent malic enzyme (770 aa).

Residues 1–440 form a malic enzyme region; the sequence is MNTGDKAKSQ…KLNRFVFRSG (440 aa). Lys-107 acts as the Proton acceptor in catalysis. A divalent metal cation is bound by residues Glu-149 and Asp-150. Positions 175 and 300 each coordinate NAD(+). Residues 441–770 form a phosphate acetyltransferase region; the sequence is FIMKPVFAAA…LAVVESSHPV (330 aa).

It in the N-terminal section; belongs to the malic enzymes family. This sequence in the C-terminal section; belongs to the phosphate acetyltransferase and butyryltransferase family. Homooctamer. Mg(2+) is required as a cofactor. The cofactor is Mn(2+).

It catalyses the reaction (S)-malate + NAD(+) = pyruvate + CO2 + NADH. Its activity is regulated as follows. Subject to substrate inhibition and shows allosteric regulation by acetyl-CoA. Its function is as follows. Required for symbiotic nitrogen fixation. Plays a key role in the conversion of malate to acetyl-CoA for efficient tricarboxylic acid cycle function in nitrogen-fixating bacteria. This Rhizobium meliloti (strain 1021) (Ensifer meliloti) protein is NAD-dependent malic enzyme (dme).